We begin with the raw amino-acid sequence, 419 residues long: Dimethylallyltryptophan synthase 1 (419 aa).

Residues Phe-81, Met-82, and Glu-90 each contribute to the L-tryptophan site. Phe-81 is a binding site for L-tyrosine. Residues Arg-105, Lys-187, Tyr-189, Arg-251, Lys-253, and Tyr-255 each coordinate (2E)-geranyl diphosphate. Dimethylallyl diphosphate contacts are provided by Arg-105, Lys-187, Tyr-189, Arg-251, Lys-253, and Tyr-255. Arg-257 contributes to the L-tryptophan binding site. An L-tyrosine-binding site is contributed by Arg-257. 2 residues coordinate (2E)-geranyl diphosphate: Lys-332 and Tyr-334. 2 residues coordinate dimethylallyl diphosphate: Lys-332 and Tyr-334. L-tryptophan is bound at residue Tyr-389. Tyr-389 lines the L-tyrosine pocket. Tyr-404 serves as a coordination point for (2E)-geranyl diphosphate.

It belongs to the tryptophan dimethylallyltransferase family.

It catalyses the reaction L-tyrosine + dimethylallyl diphosphate = 4-O-dimethylallyl-L-tyrosine + diphosphate. Functionally, dimethylallyltryptophan synthase; part of the DMATS1 gene cluster that mediates the biosynthesis of a reversely N-prenylated monomeric L-tryptophan (r-N-DMAT). DMATS1 catalyzes the reverse N-prenylation of L-Trp with DMAPP to yield N-dimethylallyl-L-tryptophan. DMATS1 exhibits unusually broad substrate specificity and can utilize geranyl diphosphate (GPP) or L-Tyr as an alternative prenyl donor or acceptor, respectively. Is able to catalyze both forward and reverse prenylation, i.e., at C1 or C3 of DMAPP; and it can catalyze C-N and C-O bond-forming reactions. The main product of the cluster is the reverse-N-dimethylallyl-L-tryptophan (r-N-DMAT) produced by the dimethylallyltryptophan synthase DMATS1 and it remains unclear whether this metabolite undergoes further modifications when silent gene clusters are activated. The acetylated form of r-N-DMAT, ac-r-N-DMAT, is also produced. The roles of the cytochrome P450 monooxygenase FFUJ_09176 and the methyltransferase FFUJ_09178 have still to be elucidated. This is Dimethylallyltryptophan synthase 1 from Gibberella fujikuroi (strain CBS 195.34 / IMI 58289 / NRRL A-6831) (Bakanae and foot rot disease fungus).